A 235-amino-acid polypeptide reads, in one-letter code: tRNA (guanine-N(1)-)-methyltransferase (235 aa).

S-adenosyl-L-methionine is bound by residues Gly-114 and 134 to 139 (IGDYIL).

The protein belongs to the RNA methyltransferase TrmD family. In terms of assembly, homodimer.

It is found in the cytoplasm. It carries out the reaction guanosine(37) in tRNA + S-adenosyl-L-methionine = N(1)-methylguanosine(37) in tRNA + S-adenosyl-L-homocysteine + H(+). In terms of biological role, specifically methylates guanosine-37 in various tRNAs. In Ehrlichia canis (strain Jake), this protein is tRNA (guanine-N(1)-)-methyltransferase.